The following is a 78-amino-acid chain: Beta-defensin 29 (78 aa).

The first 23 residues, 1–23 (MPVTKSYFMTVVVVLILVDETTG), serve as a signal peptide directing secretion. Cystine bridges form between Cys-40–Cys-67, Cys-47–Cys-61, and Cys-51–Cys-68.

This sequence belongs to the beta-defensin family. In terms of tissue distribution, highly expressed in the cauda epididymis.

It is found in the secreted. In terms of biological role, has antibacterial activity. The protein is Beta-defensin 29 (Defb29) of Mus musculus (Mouse).